We begin with the raw amino-acid sequence, 394 residues long: 3-hydroxybenzoate 6-hydroxylase 1 (394 aa).

This sequence belongs to the 3-hydroxybenzoate 6-hydroxylase family. As to quaternary structure, homotrimer. It depends on FAD as a cofactor.

The catalysed reaction is 3-hydroxybenzoate + NADH + O2 + H(+) = 2,5-dihydroxybenzoate + NAD(+) + H2O. Inhibited by manganese, copper, mercury, and iron ions. Its function is as follows. Catalyzes the NAD- or NADP-dependent conversion of 3-hydroxybenzoate to gentisate. The affinity of the enzyme toward NAD is twice as high as for NADP. The enzyme shows higher specific activities against the intermediates in the degradation of 2,5-xylenol and 3,5-xylenol, 3-hydroxy-4-methylbenzoate and 3-hydroxy-5-methylbenzoate, respectively, than for 3-hydroxybenzoate. It also shows activity against 3-substituted benzoates. The chain is 3-hydroxybenzoate 6-hydroxylase 1 (xlnD) from Aquipseudomonas alcaligenes (Pseudomonas alcaligenes).